The chain runs to 645 residues: Cysteine-rich receptor-like protein kinase 19 (645 aa).

Positions 1–20 (MSSLISFIFLFLFSSITASA) are cleaved as a signal peptide. The Extracellular portion of the chain corresponds to 21–262 (QNTFYLYHNC…PRPGKGGNSS (242 aa)). 2 Gnk2-homologous domains span residues 24-129 (FYLY…NRNI) and 135-239 (TDGG…NYAF). 7 N-linked (GlcNAc...) asparagine glycosylation sites follow: asparagine 29, asparagine 39, asparagine 57, asparagine 101, asparagine 185, asparagine 241, and asparagine 260. Residues 263–283 (VIIIAVVVPITVLFLLLVAVF) traverse the membrane as a helical segment. The Cytoplasmic portion of the chain corresponds to 284–645 (SVRAKNKRTL…EASITRVTPR (362 aa)). A Protein kinase domain is found at 326–603 (FLPINKLGQG…IVQMLTTSLI (278 aa)). ATP is bound by residues 332 to 340 (LGQGGFGEV) and lysine 354. Phosphotyrosine is present on tyrosine 399. Aspartate 451 acts as the Proton acceptor in catalysis. Threonine 491 carries the phosphothreonine modification. Tyrosine 499 carries the post-translational modification Phosphotyrosine. The interval 616 to 645 (RSKQEQAGPSIDSSTHCSVDEASITRVTPR) is disordered. Residues 620–632 (EQAGPSIDSSTHC) are compositionally biased toward polar residues.

It belongs to the protein kinase superfamily. Ser/Thr protein kinase family. CRK subfamily. In terms of assembly, interacts with MWL1.

It localises to the membrane. The catalysed reaction is L-seryl-[protein] + ATP = O-phospho-L-seryl-[protein] + ADP + H(+). It carries out the reaction L-threonyl-[protein] + ATP = O-phospho-L-threonyl-[protein] + ADP + H(+). The chain is Cysteine-rich receptor-like protein kinase 19 (CRK19) from Arabidopsis thaliana (Mouse-ear cress).